Reading from the N-terminus, the 510-residue chain is Putative glycerol-3-phosphate transporter 3 (510 aa).

A run of 12 helical transmembrane segments spans residues 31–51 (LSFK…YIAF), 91–111 (ALLG…MFVA), 123–143 (FLTI…VAFW), 158–178 (LAGW…GNWF), 185–205 (VIMG…TLIA), 217–237 (FVGP…FLPV), 279–299 (VGFL…CLFF), 331–351 (GNLS…AGYF), 355–375 (LDGR…ALFL), 378–398 (IYGH…GLFV), 436–456 (TGSV…AISW), and 459–479 (VFYM…TLII).

It belongs to the major facilitator superfamily. Organophosphate:Pi antiporter (OPA) (TC 2.A.1.4) family.

Its subcellular location is the membrane. The chain is Putative glycerol-3-phosphate transporter 3 from Arabidopsis thaliana (Mouse-ear cress).